A 308-amino-acid chain; its full sequence is Protein doublecortin (308 aa).

The Doublecortin 1 domain maps to 21–104 (ARVILFRNGD…AEPLNTEVIP (84 aa)). Residues 115–167 (EVSDQDDEPKPSKPFVSSVPPPPTPTPTSSSGTTTTSQPTLSASPSVSSAQSP) are disordered. The span at 141 to 167 (PTSSSGTTTTSQPTLSASPSVSSAQSP) shows a compositional bias: low complexity. The Doublecortin 2 domain maps to 194–277 (KVIMCFRNGD…GETLNPLDFS (84 aa)). The tract at residues 282-308 (EHVKQKKLQEQQQQASEQQKPQEQEIF) is disordered. Over residues 291 to 300 (EQQQQASEQQ) the composition is skewed to low complexity.

Interacts with lis1.

The protein resides in the cytoplasm. It is found in the cytoskeleton. Its function is as follows. Has a cytoskeleton-independent function in chemotactic signaling during development. The sequence is that of Protein doublecortin (dcx) from Dictyostelium discoideum (Social amoeba).